The sequence spans 111 residues: Phosphoribosyl-ATP pyrophosphatase (111 aa).

Belongs to the PRA-PH family.

It localises to the cytoplasm. The catalysed reaction is 1-(5-phospho-beta-D-ribosyl)-ATP + H2O = 1-(5-phospho-beta-D-ribosyl)-5'-AMP + diphosphate + H(+). Its pathway is amino-acid biosynthesis; L-histidine biosynthesis; L-histidine from 5-phospho-alpha-D-ribose 1-diphosphate: step 2/9. The protein is Phosphoribosyl-ATP pyrophosphatase of Alcanivorax borkumensis (strain ATCC 700651 / DSM 11573 / NCIMB 13689 / SK2).